Here is a 416-residue protein sequence, read N- to C-terminus: Pigment epithelium-derived factor (416 aa).

Residues 1 to 20 (MQALVLLLWTGALLGFGRCQ) form the signal peptide. Ser-112 and Ser-225 each carry phosphoserine. The N-linked (GlcNAc...) asparagine glycan is linked to Asn-283.

The protein belongs to the serpin family. In terms of assembly, interacts with PNPLA2; this interaction stimulates the phospholipase A2 activity of PNPLA2. Retinal pigment epithelial cells. Located in the interphotoreceptor matrix (IPM) which is between the retinal pigment epithelium and the neural retina.

The protein resides in the secreted. It localises to the melanosome. Neurotrophic protein; induces extensive neuronal differentiation in retinoblastoma cells. Potent inhibitor of angiogenesis. As it does not undergo the S (stressed) to R (relaxed) conformational transition characteristic of active serpins, it exhibits no serine protease inhibitory activity. This is Pigment epithelium-derived factor (SERPINF1) from Bos taurus (Bovine).